A 202-amino-acid chain; its full sequence is Ribosome maturation factor RimP (202 aa).

It belongs to the RimP family.

The protein localises to the cytoplasm. Functionally, required for maturation of 30S ribosomal subunits. The sequence is that of Ribosome maturation factor RimP from Polaromonas naphthalenivorans (strain CJ2).